A 303-amino-acid polypeptide reads, in one-letter code: Counting factor 50 (303 aa).

Residues 1 to 24 form the signal peptide; the sequence is MNKMNNIFLIISSIILSIVIFVSG. Residues 28 to 240 enclose the Ch-type lysozyme domain; it reads IDFSSEISVG…CSTSSGSASG (213 aa). Residue Asn-67 is glycosylated (N-linked (GlcNAc...) asparagine). Glu-125 is an active-site residue. N-linked (GlcNAc...) asparagine glycosylation is present at Asn-170. The segment at 226–303 is S-G-S motif repeats; the sequence is GSGSGCSTSS…GSGTGSGSSI (78 aa). A compositionally biased stretch (low complexity) spans 236 to 292; it reads GSASGSASGSASGSASGSNSGSSNSGSSNSGSSNSGSNSGSSNSGSGNSGSSNSGSA. Residues 236-303 are disordered; that stretch reads GSASGSASGS…GSGTGSGSSI (68 aa). Residues 293-303 show a composition bias toward gly residues; it reads SGSGTGSGSSI.

Belongs to the glycosyl hydrolase 25 family. In terms of assembly, monomer. Component of the counting factor (CF) complex, which includes cf60, cf50, cf45-1 and ctnA.

It localises to the secreted. The enzyme catalyses Hydrolysis of (1-&gt;4)-beta-linkages between N-acetylmuramic acid and N-acetyl-D-glucosamine residues in a peptidoglycan and between N-acetyl-D-glucosamine residues in chitodextrins.. Cell-counting factor that limits the maximum size of the multicellular structure during aggregation. Has a very low lysozyme activity. This is Counting factor 50 (cf50-1) from Dictyostelium discoideum (Social amoeba).